A 491-amino-acid chain; its full sequence is FAD-dependent monooxygenase cle3 (491 aa).

Residues Glu55, Gly69, Arg128, Asp330, and Ala343 each coordinate FAD. Residue Asn380 is glycosylated (N-linked (GlcNAc...) asparagine). The chain crosses the membrane as a helical span at residues 462–482; the sequence is STVVWTSLGILGLVVFLFLLF.

It belongs to the paxM FAD-dependent monooxygenase family. FAD is required as a cofactor.

It localises to the membrane. It functions in the pathway secondary metabolite biosynthesis; terpenoid biosynthesis. FAD-dependent monooxygenase; part of the cluster A that mediates the biosynthesis of chevalone E and its oxidized derivatives that possess a unique five-membered lactone ring and can synergistically enhance the cytotoxicity of doxorubicin (DOX) in breast cancer cells. Within the pathway, cle3 takes part to the biosynthesis of the molecular scaffold by catalyzing the formation of an (S)-epoxide ring at the terminal olefin of the geranylgeranyl group. The molecular scaffold is commonly biosynthesized by a series of enzymes including the non-reducing polyketide synthase (NR-PKS) cle1 that produces the alpha-pyrone triacetic acid lactone (TAL); The membrane-bound prenyltransferase cle5 that accepts TAL as its substrate to perform a C-3 geranylgeranylation reaction, in which the pathway-dedicated GGPS cle6 is required to provide GGPP, the other substrate of cle5; the FAD-dependent monooxygenase Cle3 that forms an (S)-epoxide ring at the terminal olefin of the geranylgeranyl group; and the terpene cyclase Cle7 that catalyzes the cyclization of the prenyl group that yields the pentacyclic pathway intermediate chevalone E. Chevalone E can derivatize into seven new oxidized analogs by the cytochrome P450 monooxygenases cle2 (acting at C-20) and cle4 (acting at C-11 and C-12). This Aspergillus versicolor protein is FAD-dependent monooxygenase cle3.